A 189-amino-acid chain; its full sequence is Apolipoprotein D (189 aa).

The N-terminal stretch at 1 to 20 is a signal peptide; it reads MGMMLLLLSMLAGLVAEAEG. At Q21 the chain carries Pyrrolidone carboxylic acid. 2 cysteine pairs are disulfide-bonded: C28-C134 and C61-C185. N-linked (GlcNAc...) asparagine glycosylation is found at N65 and N98.

It belongs to the calycin superfamily. Lipocalin family. In terms of assembly, homodimer.

It is found in the secreted. Its function is as follows. APOD occurs in the macromolecular complex with lecithin-transport and binding of bilin. Appears to be able to transport a variety of ligands in a number of different contexts. In Cavia porcellus (Guinea pig), this protein is Apolipoprotein D (APOD).